A 653-amino-acid chain; its full sequence is Forkhead box protein O1 (653 aa).

Disordered stretches follow at residues 1–64 and 117–156; these read MAEA…ASAA and LHPAPPQPPPPGPLSQHPPVPPAAGPLAGQPRKSSSSRRN. Position 24 is a phosphothreonine; by PKB/AKT1 or PKB/AKT2 and SGK1 (T24). Positions 35 to 64 are enriched in low complexity; the sequence is SNSATSSPAPSGGATANPDASAGLPPASAA. Residues 119 to 140 show a composition bias toward pro residues; sequence PAPPQPPPPGPLSQHPPVPPAA. The segment at residues 157–233 is a DNA-binding region (fork-head); the sequence is AWGNLSYADL…VQNEGTGKSS (77 aa). DNA-binding regions lie at residues 209 to 216 and 232 to 235; these read NSIRHNLS and SSWW. A Phosphoserine; by STK4/MST1 modification is found at S210. Phosphoserine occurs at positions 216, 232, and 233. The tract at residues 232 to 335 is disordered; sequence SSWWMLNPEG…FSPIMTEQDD (104 aa). K243 and K246 each carry N6-acetyllysine. S247 is modified (phosphoserine; by CDK1). An omega-N-methylarginine; by PRMT1 mark is found at R249 and R251. Residues 249-251 carry the Nuclear localization signal motif; it reads RRR. S254 is modified (phosphoserine; by PKB/AKT1 and SGK1). 3 positions are modified to N6-acetyllysine: K260, K263, and K272. Positions 281–561 are sufficient for interaction with NLK; the sequence is GAGDSPGSQF…RLTPVKTPLQ (281 aa). Phosphoserine is present on residues S285 and S296. Positions 307–324 are enriched in polar residues; that stretch reads NWSTFRPRTSSNASTISG. S317 carries the phosphoserine; by PKB/AKT1 or PKB/AKT2 modification. S320 bears the Phosphoserine; by CK1 and SGK1 mark. S323 is subject to Phosphoserine. Position 327 is a phosphoserine; by DYRK1A (S327). Residue T331 is modified to Phosphothreonine. The segment at 361–457 is required for interaction with RUNX2; that stretch reads SEISNPENME…GGLNQFNCAQ (97 aa). K421 is subject to N6-acetyllysine. The Required for interaction with SIRT1 motif lies at 460–464; the sequence is LKELL.

In terms of assembly, interacts with LRPPRC. Interacts with RUNX2; the interaction inhibits RUNX2 transcriptional activity and mediates the IGF1/insulin-dependent BGLAP expression in osteoblasts Interacts with PPP2R1A; the interaction regulates the dephosphorylation of FOXO1 at Thr-24 and Ser-254 leading to its nuclear import. Interacts with NLK. Interacts with SIRT1; the interaction results in the deacetylation of FOXO1 leading to activation of FOXO1-mediated transcription of genes involved in DNA repair and stress resistance. Binds to CDK1. Interacts with the 14-3-3 proteins, YWHAG and YWHAZ; the interactions require insulin-stimulated phosphorylation on Thr-24, promote nuclear exit and loss of transcriptional activity. Interacts with SKP2; the interaction ubiquitinates FOXO1 leading to its proteasomal degradation. The interaction requires the presence of KRIT1. Interacts (via the C-terminal half) with ATF4 (via its DNA-binding domain); the interaction occurs in osteoblasts, regulates glucose homeostasis via suppression of beta-cell proliferation and subsequent decrease in insulin production. Interacts with PRMT1; the interaction methylates FOXO1, prevents PKB/AKT1 phosphorylation and retains FOXO1 in the nucleus. Interacts with EP300 and CREBBP; the interactions acetylate FOXO1. Interacts with SIRT2; the interaction is disrupted in response to oxidative stress or serum deprivation, leading to increased level of acetylated FOXO1, which promotes stress-induced autophagy by stimulating E1-like activating enzyme ATG7. Interacts (acetylated form) with ATG7; the interaction is increased in response to oxidative stress or serum deprivation and promotes the autophagic process leading to cell death. Interacts (acetylated form) with PPARG. Interacts with XBP1; this interaction is direct and leads to FOXO1 ubiquitination and degradation via the proteasome pathway. Interacts with WDFY2. Forms a complex with WDFY2 and AKT1. Interacts with CRY1. Interacts with PPIA/CYPA; the interaction promotes FOXO1 dephosphorylation, nuclear accumulation and transcriptional activity. Interacts with TOX4; FOXO1 is required for full induction of TOX4-dependent activity and the interaction is inhibited by insulin. Interacts (when phosphorylated on Ser-254) with STUB1/CHIP. In terms of processing, phosphorylation by NLK promotes nuclear export and inhibits the transcriptional activity. In response to growth factors, phosphorylation on Thr-24, Ser-254 and Ser-320 by PKB/AKT1 promotes nuclear export and inactivation of transactivational activity. Phosphorylation on Thr-24 is required for binding 14-3-3 proteins. Phosphorylation of Ser-254 decreases DNA-binding activity and promotes the phosphorylation of Thr-24 and Ser-317, permitting phosphorylation of Ser-320 and Ser-323, probably by CDK1, leading to nuclear exclusion and loss of function. Stress signals, such as response to oxygen or nitric oxide, attenuate the PKB/AKT1-mediated phosphorylation leading to nuclear retention. Phosphorylation of Ser-327 is independent of IGF1 and leads to reduced function. Dephosphorylated on Thr-24 and Ser-254 by PP2A in beta-cells under oxidative stress leading to nuclear retention. Phosphorylation of Ser-247 by CDK1 disrupts binding of 14-3-3 proteins leading to nuclear accumulation and has no effect on DNA binding nor transcriptional activity. Phosphorylation by STK4/MST1 on Ser-210, upon oxidative stress, inhibits binding to 14-3-3 proteins and nuclear export. PPIA/CYPA promotes its dephosphorylation on Ser-254. Post-translationally, ubiquitinated by SKP2. Ubiquitination leads to proteasomal degradation. Ubiquitinated by STUB1/CHIP; when Ser-254 is phosphorylated. Methylation inhibits AKT1-mediated phosphorylation at Ser-254 and is increased by oxidative stress. In terms of processing, acetylated. Acetylation at Lys-260 and Lys-272 are necessary for autophagic cell death induction. Deacetylated by SIRT2 in response to oxidative stress or serum deprivation, thereby negatively regulating FOXO1-mediated autophagic cell death. Once in the nucleus, acetylated by CREBBP/EP300. Acetylation diminishes the interaction with target DNA and attenuates the transcriptional activity. It increases the phosphorylation at Ser-254. Deacetylation by SIRT1 results in reactivation of the transcriptional activity. Oxidative stress by hydrogen peroxide treatment appears to promote deacetylation and uncoupling of insulin-induced phosphorylation. By contrast, resveratrol acts independently of acetylation. Acetylated at Lys-421, promoting its localization to the nucleus and transcription factor activity. Deacetylation at Lys-421 by SIRT6, promotes its translocation into the cytoplasm, preventing its transcription factor activity. Deacetylation and subsequent inhibition by SIRT6 has different effects depending on cell types: it inhibits gluconeogenesis in hepatocytes, promotes glucose sensing in pancreatic beta-cells and regulates lipid catabolism in brown adipocytes.

Its subcellular location is the cytoplasm. The protein localises to the nucleus. Functionally, transcription factor that is the main target of insulin signaling and regulates metabolic homeostasis in response to oxidative stress. Binds to the insulin response element (IRE) with consensus sequence 5'-TT[G/A]TTTTG-3' and the related Daf-16 family binding element (DBE) with consensus sequence 5'-TT[G/A]TTTAC-3'. Activity suppressed by insulin. Main regulator of redox balance and osteoblast numbers and controls bone mass. Orchestrates the endocrine function of the skeleton in regulating glucose metabolism. Also acts as a key regulator of chondrogenic commitment of skeletal progenitor cells in response to lipid availability: when lipids levels are low, translocates to the nucleus and promotes expression of SOX9, which induces chondrogenic commitment and suppresses fatty acid oxidation. Acts synergistically with ATF4 to suppress osteocalcin/BGLAP activity, increasing glucose levels and triggering glucose intolerance and insulin insensitivity. Also suppresses the transcriptional activity of RUNX2, an upstream activator of osteocalcin/BGLAP. Acts as an inhibitor of glucose sensing in pancreatic beta cells by acting as a transcription repressor and suppressing expression of PDX1. In hepatocytes, promotes gluconeogenesis by acting together with PPARGC1A and CEBPA to activate the expression of genes such as IGFBP1, G6PC1 and PCK1. Also promotes gluconeogenesis by directly promoting expression of PPARGC1A and G6PC1. Important regulator of cell death acting downstream of CDK1, PKB/AKT1 and STK4/MST1. Promotes neural cell death. Mediates insulin action on adipose tissue. Regulates the expression of adipogenic genes such as PPARG during preadipocyte differentiation and, adipocyte size and adipose tissue-specific gene expression in response to excessive calorie intake. Regulates the transcriptional activity of GADD45A and repair of nitric oxide-damaged DNA in beta-cells. Required for the autophagic cell death induction in response to starvation or oxidative stress in a transcription-independent manner. Mediates the function of MLIP in cardiomyocytes hypertrophy and cardiac remodeling. Positive regulator of apoptosis in cardiac smooth muscle cells as a result of its transcriptional activation of pro-apoptotic genes. Regulates endothelial cell (EC) viability and apoptosis in a PPIA/CYPA-dependent manner via transcription of CCL2 and BCL2L11 which are involved in EC chemotaxis and apoptosis. This is Forkhead box protein O1 (FOXO1) from Ictidomys tridecemlineatus (Thirteen-lined ground squirrel).